Here is a 206-residue protein sequence, read N- to C-terminus: 2,3-bisphosphoglycerate-dependent phosphoglycerate mutase (206 aa).

Substrate-binding positions include 9 to 16 (RHGQSEWN), 22 to 23 (TG), Arg61, 88 to 91 (ERDY), Lys99, 115 to 116 (RR), and 159 to 160 (GN). The active-site Tele-phosphohistidine intermediate is His10. Glu88 (proton donor/acceptor) is an active-site residue.

Belongs to the phosphoglycerate mutase family. BPG-dependent PGAM subfamily. As to quaternary structure, homodimer.

It catalyses the reaction (2R)-2-phosphoglycerate = (2R)-3-phosphoglycerate. The protein operates within carbohydrate degradation; glycolysis; pyruvate from D-glyceraldehyde 3-phosphate: step 3/5. Functionally, catalyzes the interconversion of 2-phosphoglycerate and 3-phosphoglycerate. The protein is 2,3-bisphosphoglycerate-dependent phosphoglycerate mutase of Brucella anthropi (strain ATCC 49188 / DSM 6882 / CCUG 24695 / JCM 21032 / LMG 3331 / NBRC 15819 / NCTC 12168 / Alc 37) (Ochrobactrum anthropi).